The primary structure comprises 932 residues: DNA mismatch repair protein MutS (932 aa).

The segment covering 1–13 (MTTDTDTDVDAGT) has biased composition (acidic residues). Residues 1-26 (MTTDTDTDVDAGTDLEPQPEGPPEKM) form a disordered region. Residue 648–655 (GPNMSGKS) coordinates ATP. Positions 865–892 (NQQNQASDDDEIARSPRGADTNTDAGIN) are disordered.

It belongs to the DNA mismatch repair MutS family.

Functionally, this protein is involved in the repair of mismatches in DNA. It is possible that it carries out the mismatch recognition step. This protein has a weak ATPase activity. This Haloquadratum walsbyi (strain DSM 16790 / HBSQ001) protein is DNA mismatch repair protein MutS.